The sequence spans 204 residues: Probable UMP-CMP kinase 1 (204 aa).

31–36 (GSGKGT) provides a ligand contact to ATP. The NMP stretch occupies residues 51 to 80 (SAGDLLRAEIKSGSEFGAMIQSMIAEGRIV). Residues R57, 78 to 80 (RIV), and 105 to 108 (GFPR) contribute to the a ribonucleoside 5'-phosphate site. N112 is a binding site for CMP. The tract at residues 143–151 (SRNQGREDD) is LID. R144 lines the ATP pocket. Residues R148 and R159 each contribute to the a ribonucleoside 5'-phosphate site. An ATP-binding site is contributed by K187.

This sequence belongs to the adenylate kinase family. UMP-CMP kinase subfamily. Monomer. Mg(2+) serves as cofactor.

Its subcellular location is the cytoplasm. It is found in the nucleus. The enzyme catalyses CMP + ATP = CDP + ADP. It carries out the reaction dCMP + ATP = dCDP + ADP. It catalyses the reaction UMP + ATP = UDP + ADP. Functionally, catalyzes the phosphorylation of pyrimidine nucleoside monophosphates at the expense of ATP. Plays an important role in de novo pyrimidine nucleotide biosynthesis. Has preference for UMP and CMP as phosphate acceptors. This is Probable UMP-CMP kinase 1 (UMK1) from Arabidopsis thaliana (Mouse-ear cress).